Reading from the N-terminus, the 362-residue chain is uncharacterized protein (362 aa).

The helical transmembrane segment at 13 to 33 (VLILSVGLNMLFLLLFYSAIF) threads the bilayer. The region spanning 314-357 (EEYVVQDGDSLWLIAKRFGIPMDKIIQKNGLNHHRLFPGKVLKL) is the LysM domain.

The protein belongs to the chlamydial CPn_0593/CT_474/TC_0759 family.

Its subcellular location is the membrane. This is an uncharacterized protein from Chlamydia pneumoniae (Chlamydophila pneumoniae).